The chain runs to 1760 residues: MSNRYSVYSSHSAAFSTGGRAPQAGGQVSTTTLLNALHAHYTTGQPYQLDAGTSLVVNTLLTATQSSPEGHTGPTIDHELAVRAWEHARRRAEDGCIVLCSAHHSAPSILEPFLAALPLSTPSIAFTALAALRPFLTAVTTFNPSYSLYSALSACYNLTLKGDITGLSLALSTSGINVRKGFLDIPSEPGYRAFDVFYYLLTSASTPAEREFLDLRDASSYALLRKSGTYTPPSYLPTADDAAAAEDFRSALKAIGIKGASQRGLLSVLAGLLKLGNAAGFLVDQEDLEEACEDVGGLLGIDPEVLLHKCSTDDREVLISGIYEALVDWVIGKANEAIASQLQASLDDSSRGSGQAAQWTDDDTVSITVVDLPRPALGKAVAMRGIFDDTLGINAEMKDDGVVVPPAGPAVLNDMTAAIAQVEVDLGITTGPTWREREYELDKKHEVLEKVGLEVEMDSFLRQILFTAESEGITLGKKGRFDLATTLGSSRVWHHISIHPTDDLPENLSPGVPTAAWSAGAVSRQLREWRLAEWANRRLKQIDFTADFDIEEFIGRYFRLGCGEGKDGVENWLVERGWINGDAVVGHQRIWVRENAWWEAETMLDLKPEEPPAASPFMYGGGMLDPGVPHYAVPPIAESTSLLGSRDNLLNRQSTLVPSVAGGAKSIAPSAPHTLHTGGDYGLGTKGDDKKYDSHPYYDDEGRYLGELDPEYADPKHIEKKEITLGRRIWTGFVWALTFWIPSFVLRFVGRMKRPDVRMAWREKLVLVFLILLFNAIVCFYIIAFGNLLCPNKDKVWNEKEVSYHQGNNDFYVSIHGKVYDISKFWKIQHSDTSIETTTSNMEPFMGENLDAYFPPPLTRLCGDFVTDESITLRNNDTNAVLYSNAKHSCGPLQQTDPNTALHKITWYEDVFLPKIDEYYKGSLVWKRSEVSKQADSSSRYWVIKDESIYDLTDYFYTLKQMNNIDSYNFLPSSITELFKNYPGTDVTDKWPNSENATKAQTCLDYVFYKGKVDFRDSARCQVNNYILLAFTCLICAVILVKFLAALQLGSKRRPAPQDKFVICLVPAYTEGEDSLRKGLDSLTALQYDNKRKLIYVICDGMIVGGGNDRPTPKIVLDILGVDPKIDPPALPFKSIGQGSDQLNYGKVYSGLYEYEGNVVPYIVVVKVGKESEQSKSKPGNRGKRDSQIQIMNFLNRVHHRAPMSPLELEIFHQINNVIGVDPELYEYCLMVDADTSVREDSLNRLVAACANDARIAGICGETSLQNEERSWWTMIQVYEYYISHHLSKAFESLFGSVTCLPGCFCMYRLRTADKGRPLIISDKVIKEYADNDVDTLHKKNLLSLGEDRYLTTLMTKHFPTMSYKFIPDAYASTAAPETFSVLLSQRRRWINSTVHNLVELAALKDLCGFCCFSMRFVVLVDLLGTIILPATCVYLGYLIYSVASGGPIPIISIAILAGVYGLQAIIFIVKRQWQHIGWMIIYICAYPIYSFVLPMYSFWKQDDFSWGNTRVVLGEKGNKRVVAVEDEPFDPRSIPLQRWDDYALANNLPGRRGDYNMSQEKFYGGQYGDMGMEMDDMHSQYSSVKPASTILTGFPGAGRNGSPYMPPQSPAPFGGNTPGNRHSHLSSFSRYTDMPLQPGHQSRNLSVGNLSQFQDPSNRHSVGLMQSTDNLLGVPRPNSRSPVGGYTSRPQSAFDFRGSGGPDEMAITDAIRSCLAEVDLDTVTKKQVRALVEQRLQATLTGDKRAFLDRQIDQELANM.

The N-linked (GlcNAc...) asparagine glycan is linked to Asn-157. The next 2 membrane-spanning stretches (helical) occupy residues 729-749 (IWTGFVWALTFWIPSFVLRFV) and 765-785 (LVLVFLILLFNAIVCFYIIAF). Asn-876 and Asn-996 each carry an N-linked (GlcNAc...) asparagine glycan. A helical transmembrane segment spans residues 1027–1047 (ILLAFTCLICAVILVKFLAAL). Asn-1392 carries an N-linked (GlcNAc...) asparagine glycan. 3 consecutive transmembrane segments (helical) span residues 1417–1437 (FVVLVDLLGTIILPATCVYLG), 1449–1469 (IPIISIAILAGVYGLQAIIFI), and 1477–1497 (IGWMIIYICAYPIYSFVLPMY). Asn-1557, Asn-1645, and Asn-1650 each carry an N-linked (GlcNAc...) asparagine glycan. The disordered stretch occupies residues 1670-1691 (DNLLGVPRPNSRSPVGGYTSRP). Positions 1702–1758 (GPDEMAITDAIRSCLAEVDLDTVTKKQVRALVEQRLQATLTGDKRAFLDRQIDQELA) constitute a DEK-C domain.

This sequence belongs to the chitin synthase family. Class V subfamily.

It localises to the cell membrane. The enzyme catalyses [(1-&gt;4)-N-acetyl-beta-D-glucosaminyl](n) + UDP-N-acetyl-alpha-D-glucosamine = [(1-&gt;4)-N-acetyl-beta-D-glucosaminyl](n+1) + UDP + H(+). Polymerizes chitin, a structural polymer of the cell wall and septum, by transferring the sugar moiety of UDP-GlcNAc to the non-reducing end of the growing chitin polymer. Plays an important role in cell-wall formation during both hyphal growth and conidiation. The chain is Chitin synthase A from Aspergillus oryzae (strain ATCC 42149 / RIB 40) (Yellow koji mold).